The chain runs to 104 residues: Large ribosomal subunit protein bL21 (104 aa).

It belongs to the bacterial ribosomal protein bL21 family. Part of the 50S ribosomal subunit. Contacts protein L20.

Functionally, this protein binds to 23S rRNA in the presence of protein L20. In Acidiphilium cryptum (strain JF-5), this protein is Large ribosomal subunit protein bL21.